The following is an 89-amino-acid chain: Small ribosomal subunit protein uS14 (89 aa).

It belongs to the universal ribosomal protein uS14 family. As to quaternary structure, part of the 30S ribosomal subunit. Contacts proteins S3 and S10.

Binds 16S rRNA, required for the assembly of 30S particles and may also be responsible for determining the conformation of the 16S rRNA at the A site. This Shouchella clausii (strain KSM-K16) (Alkalihalobacillus clausii) protein is Small ribosomal subunit protein uS14.